We begin with the raw amino-acid sequence, 292 residues long: Syntaxin-19 (292 aa).

Residues 207–269 form the t-SNARE coiled-coil homology domain; that stretch reads LSEIEQRHKE…NNTKEKFGLA (63 aa).

The protein belongs to the syntaxin family. In terms of assembly, interacts with EGFR. Expressed in stomach, lung and skin (at protein level). In stomach, strongly expressed in the mucosa of the fundus, in epithelial cells of gastric pits, and in gastric glands (at protein level). In skin, expressed in the epidermis, dermis, and epithelial layer of the hair bulb (at protein level).

It is found in the cell membrane. Its subcellular location is the cytoplasm. Functionally, plays a role in endosomal trafficking of the epidermal growth factor receptor (EGFR). This chain is Syntaxin-19, found in Mus musculus (Mouse).